The following is a 118-amino-acid chain: Protein RALF-like 24 (118 aa).

The first 22 residues, 1–22 (MSRSLALVYLSLLCLQTHLSIS), serve as a signal peptide directing secretion. Residues 23-63 (VTVPIPSVNGEIDAMLNRNGVIGEEEGEEMMPSEISRRVMM) constitute a propeptide, removed in mature form. Cystine bridges form between cysteine 81–cysteine 91 and cysteine 103–cysteine 109.

This sequence belongs to the plant rapid alkalinization factor (RALF) family. Proteolytically cleaved, probably by S1P, a subtilisin-like serine protease (subtilase).

Its subcellular location is the secreted. Cell signaling peptide that may regulate plant stress, growth, and development. Mediates a rapid alkalinization of extracellular space by mediating a transient increase in the cytoplasmic Ca(2+) concentration leading to a calcium-dependent signaling events through a cell surface receptor and a concomitant activation of some intracellular mitogen-activated protein kinases. The polypeptide is Protein RALF-like 24 (RALFL24) (Arabidopsis thaliana (Mouse-ear cress)).